A 276-amino-acid polypeptide reads, in one-letter code: Halorhodopsin (276 aa).

A propeptide spanning residues 1–21 (MTAVSTTATTVLQATQSDVLQ) is cleaved from the precursor. The Extracellular segment spans residues 22 to 25 (EIQS). A helical transmembrane segment spans residues 26-51 (NFLLNSSIWVNIALAGVVILLFVAMG). At 52–57 (RDLESP) the chain is on the cytoplasmic side. The helical transmembrane segment at 58–81 (RAKLIWVATMLVPLVSISSYAGLA) threads the bilayer. The Extracellular segment spans residues 82–105 (SGLTVGFLQMPPGHALAGQEVLSP). A helical transmembrane segment spans residues 106–127 (WGRYLTWTFSTPMILLALGLLA). The Cytoplasmic portion of the chain corresponds to 128–130 (DTD). A helical transmembrane segment spans residues 131–154 (IASLFTAITMDIGMCVTGLAAALI). Topologically, residues 155 to 157 (TSS) are extracellular. The chain crosses the membrane as a helical span at residues 158–180 (HLLRWVFYGISCAFFVAVLYVLL). Residues 181 to 192 (VQWPADAEAAGT) are Cytoplasmic-facing. Residues 193-216 (SEIFGTLKILTVVLWLGYPILWAL) form a helical membrane-spanning segment. Residues 217 to 225 (GSEGVALLS) are Extracellular-facing. Residues 226 to 254 (VGVTSWGYSGLDILAKYVFAFLLLRWVAA) traverse the membrane as a helical segment. Residue lysine 241 is modified to N6-(retinylidene)lysine. Residues 255-276 (NEGTVSGSGMGIGSGGAAPADD) lie on the Cytoplasmic side of the membrane.

This sequence belongs to the archaeal/bacterial/fungal opsin family.

The protein resides in the cell membrane. Light-driven anion pump. The protein is Halorhodopsin of Halobacterium halobium (strain shark).